Consider the following 858-residue polypeptide: Envelope glycoprotein gp160 (858 aa).

An N-terminal signal peptide occupies residues 1 to 19; it reads MMNQLLIAILLASACLVYC. The Extracellular segment spans residues 20 to 679; the sequence is TQYVTVFYGV…LTSWVKYIQY (660 aa). Asn34 carries an N-linked (GlcNAc...) asparagine; by host glycan. Cys41 and Cys54 are oxidised to a cystine. Residues Asn67, Asn76, Asn119, Asn120, Asn151, Asn166, Asn179, Asn192, Asn193, Asn196, Asn206, Asn238, Asn241, Asn248, Asn272, Asn278, Asn289, Asn300, Asn310, Asn367, Asn371, Asn400, Asn410, Asn447, Asn463, and Asn466 are each glycosylated (N-linked (GlcNAc...) asparagine; by host). 5 cysteine pairs are disulfide-bonded: Cys98/Cys214, Cys105/Cys205, Cys110/Cys163, Cys227/Cys257, and Cys237/Cys249. A V1 region spans residues 110–162; it reads CSSTESSTGNNTTSKSTSTTTTTPTDQEQEISEDTPCARADNCSGLGEEETIN. Positions 111-134 are enriched in low complexity; it reads SSTESSTGNNTTSKSTSTTTTTPT. The segment at 111-142 is disordered; sequence SSTESSTGNNTTSKSTSTTTTTPTDQEQEISE. Residues 163–205 are V2; the sequence is CQFNMTGLERDKKKQYNETWYSKDVVCETNNSTNQTQCYMNHC. The interval 305–339 is V3; sequence CKRPGNKTVKQIMLMSGHVFHSHYQPINKRPRQAW. Cys305 and Cys340 are joined by a disulfide. Cystine bridges form between Cys392–Cys446 and Cys399–Cys419. Residues 399-419 form a V4 region; the sequence is CNMTWFLNWIENKTHRNYAPC. Positions 462–469 are V5; sequence NNQTNITF. The tract at residues 512-532 is fusion peptide; sequence GVFVLGFLGFLATAGSAMGAA. The segment at 575–591 is immunosuppression; that stretch reads LQARVTAIEKYLQDQAR. 3 N-linked (GlcNAc...) asparagine; by host glycosylation sites follow: Asn611, Asn620, and Asn636. The stretch at 624-645 forms a coiled coil; sequence QEWEKQVRYLEANISKSLEQAQ. The tract at residues 657-678 is MPER; binding to GalCer; it reads KLNSWDIFGNWFDLTSWVKYIQ. The helical transmembrane segment at 680 to 700 threads the bilayer; sequence GVLIIVAVIALRIVIYVVQML. Topologically, residues 701-858 are cytoplasmic; that stretch reads SRLRKGYRPV…IRQGAEIALL (158 aa). A YXXV motif; contains endocytosis signal motif is present at residues 707 to 710; sequence YRPV. The S-palmitoyl cysteine; by host moiety is linked to residue Cys773. The short motif at 857–858 is the Di-leucine internalization motif element; the sequence is LL.

The mature envelope protein (Env) consists of a homotrimer of non-covalently associated gp120-gp41 heterodimers. The resulting complex protrudes from the virus surface as a spike. There seems to be as few as 10 spikes on the average virion. Interacts with human CD4, CCR5 and CXCR4, to form a P4HB/PDI-CD4-CXCR4-gp120 complex. Gp120 also interacts with the C-type lectins CD209/DC-SIGN and CLEC4M/DC-SIGNR (collectively referred to as DC-SIGN(R)). Gp120 and gp41 interact with GalCer. As to quaternary structure, the mature envelope protein (Env) consists of a homotrimer of non-covalently associated gp120-gp41 heterodimers. The resulting complex protrudes from the virus surface as a spike. There seems to be as few as 10 spikes on the average virion. Post-translationally, specific enzymatic cleavages in vivo yield mature proteins. Envelope glycoproteins are synthesized as an inactive precursor that is heavily N-glycosylated and processed likely by host cell furin in the Golgi to yield the mature SU and TM proteins. The cleavage site between SU and TM requires the minimal sequence [KR]-X-[KR]-R. In terms of processing, palmitoylation of the transmembrane protein and of Env polyprotein (prior to its proteolytic cleavage) is essential for their association with host cell membrane lipid rafts. Palmitoylation is therefore required for envelope trafficking to classical lipid rafts, but not for viral replication.

The protein resides in the virion membrane. The protein localises to the host cell membrane. It is found in the host endosome membrane. The surface protein gp120 (SU) attaches the virus to the host lymphoid cell by binding to the primary receptor CD4. This interaction induces a structural rearrangement creating a high affinity binding site for a chemokine coreceptor like CXCR4 and/or CCR5. This peculiar 2 stage receptor-interaction strategy allows gp120 to maintain the highly conserved coreceptor-binding site in a cryptic conformation, protected from neutralizing antibodies. Since CD4 also displays a binding site for the disulfide-isomerase P4HB/PDI, a P4HB/PDI-CD4-CXCR4-gp120 complex may form. In that complex, P4HB/PDI could reach and reduce gp120 disulfide bonds, causing major conformational changes in gp120. TXN, another PDI family member could also be involved in disulfide rearrangements in Env during fusion. These changes are transmitted to the transmembrane protein gp41 and are thought to activate its fusogenic potential by unmasking its fusion peptide. In terms of biological role, the surface protein gp120 is a ligand for CD209/DC-SIGN and CLEC4M/DC-SIGNR, which are respectively found on dendritic cells (DCs), and on endothelial cells of liver sinusoids and lymph node sinuses. These interactions allow capture of viral particles at mucosal surfaces by these cells and subsequent transmission to permissive cells. DCs are professional antigen presenting cells, critical for host immunity by inducing specific immune responses against a broad variety of pathogens. They act as sentinels in various tissues where they take up antigen, process it, and present it to T-cells following migration to lymphoid organs. HIV subverts the migration properties of dendritic cells to gain access to CD4+ T-cells in lymph nodes. Virus transmission to permissive T-cells occurs either in trans (without DCs infection, through viral capture and transmission), or in cis (following DCs productive infection, through the usual CD4-gp120 interaction), thereby inducing a robust infection. In trans infection, bound virions remain infectious over days and it is proposed that they are not degraded, but protected in non-lysosomal acidic organelles within the DCs close to the cell membrane thus contributing to the viral infectious potential during DCs' migration from the periphery to the lymphoid tissues. On arrival at lymphoid tissues, intact virions recycle back to DCs' cell surface allowing virus transmission to CD4+ T-cells. Virion capture also seems to lead to MHC-II-restricted viral antigen presentation, and probably to the activation of HIV-specific CD4+ cells. Functionally, the transmembrane protein gp41 (TM) acts as a class I viral fusion protein. Under the current model, the protein has at least 3 conformational states: pre-fusion native state, pre-hairpin intermediate state, and post-fusion hairpin state. During fusion of viral and target intracellular membranes, the coiled coil regions (heptad repeats) assume a trimer-of-hairpins structure, positioning the fusion peptide in close proximity to the C-terminal region of the ectodomain. The formation of this structure appears to drive apposition and subsequent fusion of viral and target cell membranes. Complete fusion occurs in host cell endosomes and is dynamin-dependent, however some lipid transfer might occur at the plasma membrane. The virus undergoes clathrin-dependent internalization long before endosomal fusion, thus minimizing the surface exposure of conserved viral epitopes during fusion and reducing the efficacy of inhibitors targeting these epitopes. Membranes fusion leads to delivery of the nucleocapsid into the cytoplasm. Its function is as follows. The envelope glycoprotein gp160 precursor down-modulates cell surface CD4 antigen by interacting with it in the endoplasmic reticulum and blocking its transport to the cell surface. The gp120-gp41 heterodimer seems to contribute to T-cell depletion during HIV-1 infection. The envelope glycoproteins expressed on the surface of infected cells induce apoptosis through an interaction with uninfected cells expressing the receptor (CD4) and the coreceptors CXCR4 or CCR5. This type of bystander killing may be obtained by at least three distinct mechanisms. First, the interaction between the 2 cells can induce cellular fusion followed by nuclear fusion within the syncytium. Syncytia are condemned to die from apoptosis. Second, the 2 interacting cells may not fuse entirely and simply exchange plasma membrane lipids, after a sort of hemifusion process, followed by rapid death. Third, it is possible that virus-infected cells, on the point of undergoing apoptosis, fuse with CD4-expressing cells, in which case apoptosis is rapidly transmitted from one cell to the other and thus occurs in a sort of contagious fashion. In terms of biological role, the gp120-gp41 heterodimer allows rapid transcytosis of the virus through CD4 negative cells such as simple epithelial monolayers of the intestinal, rectal and endocervical epithelial barriers. Both gp120 and gp41 specifically recognize glycosphingolipids galactosyl-ceramide (GalCer) or 3' sulfo-galactosyl-ceramide (GalS) present in the lipid rafts structures of epithelial cells. Binding to these alternative receptors allows the rapid transcytosis of the virus through the epithelial cells. This transcytotic vesicle-mediated transport of virions from the apical side to the basolateral side of the epithelial cells does not involve infection of the cells themselves. The protein is Envelope glycoprotein gp160 (env) of Homo sapiens (Human).